We begin with the raw amino-acid sequence, 48 residues long: Small, acid-soluble spore protein O (48 aa).

The tract at residues 1 to 48 (MAKRKANHVINGMNNAKRQGNGAGYIENDQHILTEAERQNNKKRKTNQ) is disordered. Over residues 28 to 40 (NDQHILTEAERQN) the composition is skewed to basic and acidic residues.

This sequence belongs to the SspO family.

It is found in the spore core. The polypeptide is Small, acid-soluble spore protein O (Bacillus licheniformis (strain ATCC 14580 / DSM 13 / JCM 2505 / CCUG 7422 / NBRC 12200 / NCIMB 9375 / NCTC 10341 / NRRL NRS-1264 / Gibson 46)).